A 132-amino-acid polypeptide reads, in one-letter code: U-scoloptoxin(05)-Er3a (132 aa).

An N-terminal signal peptide occupies residues 1 to 19; the sequence is MRSWFVFVALLAVVFLPSS.

This sequence belongs to the scoloptoxin-05 family. In terms of processing, contains 5 disulfide bonds. In terms of tissue distribution, expressed by the venom gland.

It localises to the secreted. This is U-scoloptoxin(05)-Er3a from Ethmostigmus rubripes (Giant centipede).